A 389-amino-acid polypeptide reads, in one-letter code: Sulfate adenylyltransferase (389 aa).

It belongs to the sulfate adenylyltransferase family.

It carries out the reaction sulfate + ATP + H(+) = adenosine 5'-phosphosulfate + diphosphate. It participates in sulfur metabolism; hydrogen sulfide biosynthesis; sulfite from sulfate: step 1/3. The polypeptide is Sulfate adenylyltransferase (Microcystis aeruginosa (strain NIES-843 / IAM M-2473)).